The sequence spans 152 residues: Cell division protein SepF (152 aa).

Belongs to the SepF family. In terms of assembly, homodimer. Interacts with FtsZ.

It localises to the cytoplasm. Its function is as follows. Cell division protein that is part of the divisome complex and is recruited early to the Z-ring. Probably stimulates Z-ring formation, perhaps through the cross-linking of FtsZ protofilaments. Its function overlaps with FtsA. This chain is Cell division protein SepF, found in Clostridioides difficile (strain 630) (Peptoclostridium difficile).